The sequence spans 233 residues: MDTGVSSPRVLVVDDDSDVLASLERGLRLSGFEVSTAIDGAEALRNATETRPDAIVLDINMPVLDGVSVVTALRAMDNDVPVCVLSARSSVDDRVAGLEAGADDYLVKPFVLAELVARVKALLRRRGATATSSSETIAVGPLEVDIPGRRARVNGVDVDLTKREFDLLAVLAEHKTTVLSRAQLLELVWGYDFAADTNVVDVFIGYLRRKLEANSGPRLLHTVRGVGFVLRMQ.

Positions 9–123 (RVLVVDDDSD…ELVARVKALL (115 aa)) constitute a Response regulatory domain. D58 is modified (4-aspartylphosphate). The segment at residues 134–232 (SETIAVGPLE…VRGVGFVLRM (99 aa)) is a DNA-binding region (ompR/PhoB-type).

Post-translationally, phosphorylated by PrrB at Asp-58.

It localises to the cytoplasm. Member of the two-component regulatory system PrrB/PrrA that is involved specifically in early intracellular multiplication of Mycobacterium and is essential for its viability. Upon phosphorylation by PrrB, functions as a transcription regulator by direct binding to promoter regions of target genes to positively regulate their expression. Autoregulates its own expression. This chain is Transcriptional regulatory protein PrrA (prrA), found in Mycobacterium leprae (strain TN).